The primary structure comprises 273 residues: Proteasome subunit beta type-10 (273 aa).

The residue at position 1 (M1) is an N-acetylmethionine. Positions 1 to 39 (MQKTVLEPQRGFSFENCERNAALQRALPGLRVPHARKTG) are cleaved as a propeptide — removed in mature form. The Nucleophile role is filled by T40. S230 bears the Phosphoserine mark.

The protein belongs to the peptidase T1B family. In terms of assembly, the 26S proteasome consists of a 20S proteasome core and two 19S regulatory subunits. The 20S proteasome core is composed of 28 subunits that are arranged in four stacked rings, resulting in a barrel-shaped structure. The two end rings are each formed by seven alpha subunits, and the two central rings are each formed by seven beta subunits. The catalytic chamber with the active sites is on the inside of the barrel. Component of the immunoproteasome, where it displaces the equivalent housekeeping subunit PSMB7. Component of the spermatoproteasome, a form of the proteasome specifically found in testis. In terms of processing, autocleaved. The resulting N-terminal Thr residue of the mature subunit is responsible for the nucleophile proteolytic activity.

It is found in the cytoplasm. The protein resides in the nucleus. It carries out the reaction Cleavage of peptide bonds with very broad specificity.. Functionally, the proteasome is a multicatalytic proteinase complex which is characterized by its ability to cleave peptides with Arg, Phe, Tyr, Leu, and Glu adjacent to the leaving group at neutral or slightly basic pH. The proteasome has an ATP-dependent proteolytic activity. This subunit is involved in antigen processing to generate class I binding peptides. The protein is Proteasome subunit beta type-10 (PSMB10) of Bos taurus (Bovine).